We begin with the raw amino-acid sequence, 316 residues long: Ribosomal RNA small subunit methyltransferase H (316 aa).

Residues G37–H39, D56, F83, D106, and H113 each bind S-adenosyl-L-methionine. The tract at residues P276–E316 is disordered. A compositionally biased stretch (basic and acidic residues) spans K302–E316.

This sequence belongs to the methyltransferase superfamily. RsmH family.

The protein localises to the cytoplasm. It catalyses the reaction cytidine(1402) in 16S rRNA + S-adenosyl-L-methionine = N(4)-methylcytidine(1402) in 16S rRNA + S-adenosyl-L-homocysteine + H(+). Specifically methylates the N4 position of cytidine in position 1402 (C1402) of 16S rRNA. This is Ribosomal RNA small subunit methyltransferase H from Leptospira borgpetersenii serovar Hardjo-bovis (strain L550).